The following is a 359-amino-acid chain: uncharacterized protein (359 aa).

The 113-residue stretch at 163–275 folds into the PINc domain; it reads VVDTSCIIDG…SKVANLQKVQ (113 aa). Residues Asp-165 and Asp-244 each coordinate Mg(2+). Residues 289–350 enclose the TRAM domain; that stretch reads IYLPGDSLEL…LQTSAGRMIF (62 aa).

It belongs to the ycf81 family. This sequence in the central section; belongs to the PINc/VapC protein family. The cofactor is Mg(2+).

An RNase. This is an uncharacterized protein from Synechocystis sp. (strain ATCC 27184 / PCC 6803 / Kazusa).